A 554-amino-acid chain; its full sequence is Movement protein Hsp70h (554 aa).

It belongs to the heat shock protein 70 family.

It is found in the virion. In terms of biological role, transports viral genome to neighboring plant cells directly through plasmosdesmata, without any budding. The movement protein allows efficient cell to cell propagation, by bypassing the host cell wall barrier. Two movement proteins, p6, Hsp70h and three structural proteins, CP, CPm, and P64 are essential for cell-cell movement. Also plays a role in virion formation. Together with CPm and p64, encapsidates the 5'-terminal portion of the viral genome. The protein is Movement protein Hsp70h of Lettuce infectious yellows virus (isolate United States/92) (LIYV).